The chain runs to 140 residues: Ergosterol biosynthetic protein 28 homolog (140 aa).

4 consecutive transmembrane segments (helical) span residues 4–24 (FLNV…GNTL), 52–72 (TFGI…IDIH), 79–99 (ITLW…FVFG), and 105–125 (VGVL…LVGL).

Belongs to the ERG28 family.

The protein resides in the endoplasmic reticulum membrane. In Mus musculus (Mouse), this protein is Ergosterol biosynthetic protein 28 homolog.